The primary structure comprises 317 residues: MSTVTGAAGIGLATLAADGSVLDTWFPAPELTESGTSATSRLAVSDVPVELAALIGRDDDRRTETIAVRTVIGSLDDVAADPYDAYLRLHLLSHRLVAPHGLNAGGLFGVLTNVVWTNHGPCAIDGFEAVRARLRRRGPVTVYGVDKFPRMVDYVVPTGVRIADADRVRLGAHLAPGTTVMHEGFVNYNAGTLGASMVEGRISAGVVVGDGSDVGGGASIMGTLSGGGTHVISIGKRCLLGANSGLGISLGDDCVVEAGLYVTAGTRVTMPDSNSVKARELSGSSNLLFRRNSVSGAVEVLARDGQGIALNEDLHAN.

Positions 166 and 183 each coordinate Mg(2+). The active-site Acyl-anhydride intermediate is E199. Succinyl-CoA contacts are provided by residues R201, G216, S219, A242, 257-258 (EA), G265, K277, and 290-293 (RRNS).

This sequence belongs to the type 2 tetrahydrodipicolinate N-succinyltransferase family. Homotrimer.

It localises to the cytoplasm. The catalysed reaction is (S)-2,3,4,5-tetrahydrodipicolinate + succinyl-CoA + H2O = (S)-2-succinylamino-6-oxoheptanedioate + CoA. Its pathway is amino-acid biosynthesis; L-lysine biosynthesis via DAP pathway; LL-2,6-diaminopimelate from (S)-tetrahydrodipicolinate (succinylase route): step 1/3. In terms of biological role, catalyzes the conversion of the cyclic tetrahydrodipicolinate (THDP) into the acyclic N-succinyl-L-2-amino-6-oxopimelate using succinyl-CoA. This chain is 2,3,4,5-tetrahydropyridine-2,6-dicarboxylate N-succinyltransferase (dapD), found in Mycobacterium tuberculosis (strain CDC 1551 / Oshkosh).